The primary structure comprises 233 residues: MKRAVVVFSGGQDSTTCLVQALQQYDEVHCVTFDYGQRHRAEIDVARELALKLGAVAHKVLDVTLLNELAVSSLTRDNIPVPDYQPDAEGIPNTFVPGRNILFLTLTAIYAYQVKAEAIITGVCETDFSGYPDCRDEFVKALHHAVSLGMAKDIRFETPLMWLNKAETWALADFWGQLDLVRQETLTCYNGIKGDGCGQCAACNLRANGLNQYLGDKVGVMAVMKQKTGLAQA.

8-18 (FSGGQDSTTCL) contributes to the ATP binding site. C188, C197, C200, and C203 together coordinate Zn(2+).

The protein belongs to the QueC family. Zn(2+) is required as a cofactor.

It carries out the reaction 7-carboxy-7-deazaguanine + NH4(+) + ATP = 7-cyano-7-deazaguanine + ADP + phosphate + H2O + H(+). Its pathway is purine metabolism; 7-cyano-7-deazaguanine biosynthesis. In terms of biological role, catalyzes the ATP-dependent conversion of 7-carboxy-7-deazaguanine (CDG) to 7-cyano-7-deazaguanine (preQ(0)). This Klebsiella pneumoniae (strain 342) protein is 7-cyano-7-deazaguanine synthase.